The chain runs to 921 residues: SLSSAISPSSYAAIAAAYSARTPIFNKKKTAAVLSPLSLFHQSPSLSKTGIFLHRGRKESSSKFYIAASVTTAVPSLDDSVEKVHLPRGAMWSIHKFGGTCVGSSERIRNVAEIVVEDDSERKLVVVSAMSKVTDMMYDLIYKAQSRDDSYESALDAVMEKHKLTAFDLLDEDDLARFLTRLQHDVITLKAMLRAIYIAGHATESFSDFVVGHGELWSAQLLSFVIRKNGGDCNWMDTRDVLVVNPAGSNQVDPDYLESEKRLEKWFSSNQCQTIVATGFIASTPQNIPTTLKRDGSDFSAAIMGALLRAGQVTIWTDVNGVYSADPRKVSEAVVLKTLSYQEAWEMSYFGANVLHPRTINPVMRYDIPIVIRNIFNLSAPGTMICRESVGETEDGLKLESHVKGFATIDNLALINVEGTGMAGVPGTATAIFGAVKDVGANVIMISQASSEHSICFAVPESEVKAVAKALEARFRQALDAGRLSQVANNPNCSILATVGQKMASTPGVSATLFNALAKANINVRAIAQGCTEYNITVVLSREDCVRALKAVHSRFYLSRTTIAVGIVGPGLIGATLLDQLRDQAAILKENSKIDLRVMGITGSRTMLLSETGIDLSRWREVQKEKGQTAGLEKFVQHVRGNHFIPSTVIVDCTADSEVASHYHDWLCRGIHVITPNKKANSGPLDQYLKLRALQRRSYTHYFYEATVVAGLPIITTLQGLLETGDKILRIEGIFSGTLSYIFNNFKSTTPFSEVVSEAKAAGYTEPDPRDDLAGTDVARKVIILARGSGLKLELSDIPVQSLVPEPLRGIASAEEFLLQLPQFDSDMTRKREDAENAGEVLRYVGVVDAVNQKGVVELKRYKKEHPFAQLSGSDNINAFTTERYNKQPPIIRGPGAGAEVTAGGVFSDILRLASYLGAPS.

The N-terminal 87 residues, 1–87, are a transit peptide targeting the chloroplast; it reads SLSSAISPSS…DDSVEKVHLP (87 aa). The tract at residues 88–339 is aspartokinase; sequence RGAMWSIHKF…VSEAVVLKTL (252 aa). Residues 340–567 form an interface region; the sequence is SYQEAWEMSY…LSRTTIAVGI (228 aa). ACT domains follow at residues 417-489 and 498-575; these read VEGT…QVAN and TVGQ…LIGA. Residues 568–921 form a homoserine dehydrogenase region; the sequence is VGPGLIGATL…RLASYLGAPS (354 aa). Ile-573 contacts NAD(+). NADP(+)-binding residues include Ile-573, Arg-605, Thr-654, and Lys-678. Ile-573 contacts NADPH. Thr-654 is an NAD(+) binding site. Thr-654 and Lys-678 together coordinate NADPH. Na(+)-binding residues include Glu-705, Val-708, Ala-710, and Leu-712. Residues Gly-763 and Glu-766 each contribute to the NADP(+) site. 2 residues coordinate L-homoserine: Glu-766 and Asp-777. The Proton donor role is filled by Lys-781. An NAD(+)-binding site is contributed by Gly-898. Gly-898 is a binding site for NADP(+). Gly-898 contributes to the NADPH binding site.

In the N-terminal section; belongs to the aspartokinase family. It in the C-terminal section; belongs to the homoserine dehydrogenase family. A metal cation serves as cofactor.

The protein localises to the plastid. It localises to the chloroplast. The catalysed reaction is L-homoserine + NADP(+) = L-aspartate 4-semialdehyde + NADPH + H(+). The enzyme catalyses L-homoserine + NAD(+) = L-aspartate 4-semialdehyde + NADH + H(+). It carries out the reaction L-aspartate + ATP = 4-phospho-L-aspartate + ADP. The protein operates within amino-acid biosynthesis; L-lysine biosynthesis via DAP pathway; (S)-tetrahydrodipicolinate from L-aspartate: step 1/4. It functions in the pathway amino-acid biosynthesis; L-methionine biosynthesis via de novo pathway; L-homoserine from L-aspartate: step 1/3. Its pathway is amino-acid biosynthesis; L-methionine biosynthesis via de novo pathway; L-homoserine from L-aspartate: step 3/3. It participates in amino-acid biosynthesis; L-threonine biosynthesis; L-threonine from L-aspartate: step 1/5. The protein operates within amino-acid biosynthesis; L-threonine biosynthesis; L-threonine from L-aspartate: step 3/5. In terms of biological role, bifunctional aspartate kinase and homoserine dehydrogenase that catalyzes the first and the third steps toward the synthesis of lysine, methionine and threonine from aspartate. The chain is Bifunctional aspartokinase/homoserine dehydrogenase, chloroplastic from Daucus carota (Wild carrot).